The following is a 245-amino-acid chain: Thiopurine S-methyltransferase (245 aa).

Ser14 carries the post-translational modification Phosphoserine. Trp29–Phe40 is a binding site for S-adenosyl-L-methionine. Phe40 is a binding site for substrate. Lys58 bears the N6-acetyllysine mark. Positions 69, 90, and 152 each coordinate S-adenosyl-L-methionine.

The protein belongs to the class I-like SAM-binding methyltransferase superfamily. TPMT family. Monomer.

Its subcellular location is the cytoplasm. The catalysed reaction is S-adenosyl-L-methionine + a thiopurine = S-adenosyl-L-homocysteine + a thiopurine S-methylether.. The protein is Thiopurine S-methyltransferase (TPMT) of Panthera tigris (Tiger).